Consider the following 208-residue polypeptide: Redox-sensing transcriptional repressor Rex (208 aa).

The segment at residues Leu16–Phe55 is a DNA-binding region (H-T-H motif). Gly90–Gly95 is an NAD(+) binding site.

This sequence belongs to the transcriptional regulatory Rex family. As to quaternary structure, homodimer.

It is found in the cytoplasm. Modulates transcription in response to changes in cellular NADH/NAD(+) redox state. This Pediococcus pentosaceus (strain ATCC 25745 / CCUG 21536 / LMG 10740 / 183-1w) protein is Redox-sensing transcriptional repressor Rex.